A 725-amino-acid chain; its full sequence is MDKEIIKQHKISDEEYQEILNILGREPNLLELGVISAMWSEHCSYKSSKKYLSGFPTKAPWVIQGPGENAGVIDIGKKMAAVFKVESHNHPSFIEPFAGAATGVGGILRDVFTMGARVVAGMNSLKFGNIHDEKIGKHQKYLVKGVVSGISHYGNCMGVPTIGGECAFDECFNGNILVNAFALGTCKIKDIFYAKAEGIGNPVIYVGSKTGRDGLGGAVMASDSFNESSKSLRPTVQIGDPFAEKLLMEACLELFKTDYIVGIQDMGAAGLTSSSFEMAGRSGSGMRLYLDKTPMREEGMTPYELMLSESQERMLICAKKGYEEKVIEIFNKWGLDAAIIGEVTDSGKMELFWHGELVGLIPIEPLSEKAPILDRPVARPKYLDEIKNYKFNLNISTQEAFEKLLANENVSNKAYIYEQFDSSVQTNTLKSDGALGANSIRIKENNCLLSMAIECNSRLNYVNPKIGAAAAVASVGRKIACSGAKPLAISDCLNYGNPQNPEVMWQFAQGCEGIKLACKELNTPVVSGNVSLYNETDGVSIFPSPTIACVGVNEKAENVLKSYFSKDTSAIYLLGESKGSFGGSLIAKILDKKVAGELEDIDFSAELKLWDFLLKANEAKILDCANSIGIGGIAITLAKMCAMANLGINAKTNFADKSFIFEESPTRVIVGVKDEEEFIKFVNEMGINFAKLGNLDEKDFILDDIKISLAKLQTIYFDKFNEYLG.

Residue His-42 is part of the active site. Positions 45 and 84 each coordinate ATP. A Mg(2+)-binding site is contributed by Glu-86. Substrate-binding positions include 87–90 and Arg-109; that span reads SHNH. Catalysis depends on His-88, which acts as the Proton acceptor. Asp-110 contacts Mg(2+). Gln-237 lines the substrate pocket. Residue Asp-265 participates in Mg(2+) binding. 309-311 lines the substrate pocket; the sequence is ESQ. Residues Asp-491 and Gly-528 each coordinate ATP. Residue Asn-529 participates in Mg(2+) binding. Ser-531 is a binding site for substrate.

The protein belongs to the FGAMS family. In terms of assembly, monomer. Part of the FGAM synthase complex composed of 1 PurL, 1 PurQ and 2 PurS subunits.

Its subcellular location is the cytoplasm. The enzyme catalyses N(2)-formyl-N(1)-(5-phospho-beta-D-ribosyl)glycinamide + L-glutamine + ATP + H2O = 2-formamido-N(1)-(5-O-phospho-beta-D-ribosyl)acetamidine + L-glutamate + ADP + phosphate + H(+). Its pathway is purine metabolism; IMP biosynthesis via de novo pathway; 5-amino-1-(5-phospho-D-ribosyl)imidazole from N(2)-formyl-N(1)-(5-phospho-D-ribosyl)glycinamide: step 1/2. Its function is as follows. Part of the phosphoribosylformylglycinamidine synthase complex involved in the purines biosynthetic pathway. Catalyzes the ATP-dependent conversion of formylglycinamide ribonucleotide (FGAR) and glutamine to yield formylglycinamidine ribonucleotide (FGAM) and glutamate. The FGAM synthase complex is composed of three subunits. PurQ produces an ammonia molecule by converting glutamine to glutamate. PurL transfers the ammonia molecule to FGAR to form FGAM in an ATP-dependent manner. PurS interacts with PurQ and PurL and is thought to assist in the transfer of the ammonia molecule from PurQ to PurL. This Campylobacter lari (strain RM2100 / D67 / ATCC BAA-1060) protein is Phosphoribosylformylglycinamidine synthase subunit PurL.